Consider the following 144-residue polypeptide: Glycophorin-A (144 aa).

Polar residues predominate over residues 1–25 (SSTTVPATHTSSSSLGPEQYVSSQS). The segment at 1-55 (SSTTVPATHTSSSSLGPEQYVSSQSNDKHTSDSHPTPTSAHEVTTEFSGRTHYPP) is disordered. Ser-2 carries an O-linked (GalNAc...) serine glycan. O-linked (GalNAc...) threonine glycans are attached at residues Thr-3, Thr-4, Thr-8, and Thr-10. Ser-11, Ser-12, Ser-13, Ser-14, Ser-22, and Ser-23 each carry an O-linked (GalNAc...) serine glycan. Thr-30, Thr-36, Thr-38, Thr-44, and Thr-45 each carry an O-linked (GalNAc...) threonine glycan. Over residues 33–48 (SHPTPTSAHEVTTEFS) the composition is skewed to polar residues. Ser-48 carries an O-linked (GalNAc...) serine glycan. An O-linked (GalNAc...) threonine glycan is attached at Thr-51. Residues 70 to 92 (LVIALIIFGVMAGVIGTILFISY) traverse the membrane as a helical segment. The tract at residues 101–144 (SESDVQPLPPPDAEVPLSSVEIEDPEETDELNSFTKPNQERNES) is disordered. Residue Ser-118 is modified to Phosphoserine. A compositionally biased stretch (acidic residues) spans 121-130 (EIEDPEETDE).

The protein belongs to the glycophorin-A family. Homodimer. Component of the ankyrin-1 complex in the erythrocyte, composed of ANK1, RHCE, RHAG, SLC4A1, EPB42, GYPA, GYPB and AQP1. Interacts with SLC4A1; a GYPA monomer is bound at each end of the SLC4A1 dimer forming a heterotetramer.

Its subcellular location is the membrane. In terms of biological role, component of the ankyrin-1 complex, a multiprotein complex involved in the stability and shape of the erythrocyte membrane. Glycophorin A is the major intrinsic membrane protein of the erythrocyte. The N-terminal glycosylated segment, which lies outside the erythrocyte membrane, has MN blood group receptors. Appears to be important for the function of SLC4A1 and is required for high activity of SLC4A1. May be involved in translocation of SLC4A1 to the plasma membrane. In Macaca fuscata fuscata (Japanese macaque), this protein is Glycophorin-A.